Reading from the N-terminus, the 172-residue chain is Adenine phosphoribosyltransferase (172 aa).

This sequence belongs to the purine/pyrimidine phosphoribosyltransferase family. In terms of assembly, homodimer.

It is found in the cytoplasm. The enzyme catalyses AMP + diphosphate = 5-phospho-alpha-D-ribose 1-diphosphate + adenine. Its pathway is purine metabolism; AMP biosynthesis via salvage pathway; AMP from adenine: step 1/1. In terms of biological role, catalyzes a salvage reaction resulting in the formation of AMP, that is energically less costly than de novo synthesis. This is Adenine phosphoribosyltransferase from Prochlorococcus marinus (strain SARG / CCMP1375 / SS120).